Here is a 418-residue protein sequence, read N- to C-terminus: 3-phosphoshikimate 1-carboxyvinyltransferase (418 aa).

K26, S27, and R31 together coordinate 3-phosphoshikimate. K26 contributes to the phosphoenolpyruvate binding site. Residues G97 and R125 each contribute to the phosphoenolpyruvate site. The 3-phosphoshikimate site is built by S170, S171, Q172, D297, N320, and K324. Position 172 (Q172) interacts with phosphoenolpyruvate. The Proton acceptor role is filled by D297. The phosphoenolpyruvate site is built by R328, R375, and K400.

This sequence belongs to the EPSP synthase family. Monomer.

It localises to the cytoplasm. It carries out the reaction 3-phosphoshikimate + phosphoenolpyruvate = 5-O-(1-carboxyvinyl)-3-phosphoshikimate + phosphate. The protein operates within metabolic intermediate biosynthesis; chorismate biosynthesis; chorismate from D-erythrose 4-phosphate and phosphoenolpyruvate: step 6/7. In terms of biological role, catalyzes the transfer of the enolpyruvyl moiety of phosphoenolpyruvate (PEP) to the 5-hydroxyl of shikimate-3-phosphate (S3P) to produce enolpyruvyl shikimate-3-phosphate and inorganic phosphate. In Pseudomonas syringae pv. syringae (strain B728a), this protein is 3-phosphoshikimate 1-carboxyvinyltransferase.